Reading from the N-terminus, the 416-residue chain is MPATSFYADAAYNTQKSRQALDPDIAIDDSDLSVDEIQELEIAAADPATFGASANRRSTDLVRLYLQEIGRVRLLGRDEEVSEAQKVQRYLKLRIVLANAVKQGDEVATPYLHLIEVQERLASELGHRPSLERWAATAGINLCDLKPILSEGKRRWAEIAKMTVEELEKMQSQGLQSKEHMIKANLRLVVSVAKKYQNRGLELLDLVQEGTLGLERAVEKFDPTKGYRFSTYAYWWIRQGITRAIATSSRTIRLPVHITEKLNKIKKAQRKIAQEKGRTPTLEDLAIELDMTPTQVREVLLRVPRSVSLETKVGKDKDTELGELLETDGVTPEEMLMRESLQRDLQHLLADLTSRERDVILMRFGLADGHPYSLAEIGRALDLSRERVRQIESKALQKLRQPKRRNLIRDYLESLS.

The Polymerase core binding signature appears at 205–218; it reads DLVQEGTLGLERAV. The segment at residues 374-393 is a DNA-binding region (H-T-H motif); the sequence is LAEIGRALDLSRERVRQIES.

This sequence belongs to the sigma-70 factor family.

In terms of biological role, sigma factors are initiation factors that promote the attachment of RNA polymerase to specific initiation sites and are then released. In Nostoc sp. (strain PCC 7120 / SAG 25.82 / UTEX 2576), this protein is RNA polymerase sigma-C factor (sigC).